The sequence spans 689 residues: Glycine--tRNA ligase beta subunit (689 aa).

Belongs to the class-II aminoacyl-tRNA synthetase family. As to quaternary structure, tetramer of two alpha and two beta subunits.

The protein localises to the cytoplasm. The enzyme catalyses tRNA(Gly) + glycine + ATP = glycyl-tRNA(Gly) + AMP + diphosphate. In Pasteurella multocida (strain Pm70), this protein is Glycine--tRNA ligase beta subunit (glyS).